We begin with the raw amino-acid sequence, 215 residues long: Probable transaldolase (215 aa).

Lys-83 functions as the Schiff-base intermediate with substrate in the catalytic mechanism.

Belongs to the transaldolase family. Type 3B subfamily.

Its subcellular location is the cytoplasm. It carries out the reaction D-sedoheptulose 7-phosphate + D-glyceraldehyde 3-phosphate = D-erythrose 4-phosphate + beta-D-fructose 6-phosphate. It functions in the pathway carbohydrate degradation; pentose phosphate pathway; D-glyceraldehyde 3-phosphate and beta-D-fructose 6-phosphate from D-ribose 5-phosphate and D-xylulose 5-phosphate (non-oxidative stage): step 2/3. Its function is as follows. Transaldolase is important for the balance of metabolites in the pentose-phosphate pathway. In Methanococcus maripaludis (strain DSM 14266 / JCM 13030 / NBRC 101832 / S2 / LL), this protein is Probable transaldolase.